The chain runs to 394 residues: G2/mitotic-specific cyclin-B2 (394 aa).

This sequence belongs to the cyclin family. Cyclin AB subfamily. In terms of assembly, interacts with the CDK1 protein kinase to form a serine/threonine kinase holoenzyme complex also known as maturation promoting factor (MPF). The cyclin subunit imparts substrate specificity to the complex.

In terms of biological role, essential for the control of the cell cycle at the G2/M (mitosis) transition. The protein is G2/mitotic-specific cyclin-B2 (ccnb2) of Anguilla japonica (Japanese eel).